The following is a 502-amino-acid chain: UPF0371 protein CTC_00401 (502 aa).

It belongs to the UPF0371 family.

The protein is UPF0371 protein CTC_00401 of Clostridium tetani (strain Massachusetts / E88).